A 311-amino-acid polypeptide reads, in one-letter code: tRNA dimethylallyltransferase (311 aa).

13 to 20 (GPTASGKT) contacts ATP. Residue 15–20 (TASGKT) coordinates substrate. 2 interaction with substrate tRNA regions span residues 38–41 (DSMQ) and 166–170 (QRVLR).

The protein belongs to the IPP transferase family. As to quaternary structure, monomer. It depends on Mg(2+) as a cofactor.

It catalyses the reaction adenosine(37) in tRNA + dimethylallyl diphosphate = N(6)-dimethylallyladenosine(37) in tRNA + diphosphate. Functionally, catalyzes the transfer of a dimethylallyl group onto the adenine at position 37 in tRNAs that read codons beginning with uridine, leading to the formation of N6-(dimethylallyl)adenosine (i(6)A). This chain is tRNA dimethylallyltransferase, found in Staphylococcus aureus (strain MRSA252).